Consider the following 116-residue polypeptide: uncharacterized protein (116 aa).

The N-terminal stretch at 1-21 (MAPSTAMLIMGLLKLPRLRLA) is a signal peptide.

This is an uncharacterized protein from Saccharomyces cerevisiae (strain ATCC 204508 / S288c) (Baker's yeast).